Here is a 724-residue protein sequence, read N- to C-terminus: Protein Aster-A (724 aa).

Low complexity predominate over residues 1–18; it reads MFDTTPHSGRSTPSSSPS. A disordered region spans residues 1-66; it reads MFDTTPHSGR…TPSTQSLGSR (66 aa). The span at 57 to 66 shows a compositional bias: polar residues; that stretch reads TPSTQSLGSR. One can recognise a GRAM domain in the interval 91–158; it reads EDFRKLFSKL…KEVTCLKKEK (68 aa). The segment at 256–336 is disordered; it reads SSGAADRSQE…GPTTLGPLDL (81 aa). Ser263, Ser267, and Ser271 each carry phosphoserine. Over residues 300–312 the composition is skewed to polar residues; it reads DSQPDASSSQTVT. The segment covering 326 to 336 has biased composition (low complexity); it reads DGPTTLGPLDL. The region spanning 367 to 538 is the VASt domain; the sequence is SGRLLINSVF…ELAKAEKLSL (172 aa). A Phosphoserine modification is found at Ser415. Residues 560-579 are disordered; it reads SWRAHGDGPQHPDPDPCARA. Basic and acidic residues predominate over residues 563 to 575; that stretch reads AHGDGPQHPDPDP. The chain crosses the membrane as a helical span at residues 610 to 630; it reads LISIVICVSLIILIALNVLLF.

Expressed in liver.

The protein localises to the endoplasmic reticulum membrane. It localises to the cell membrane. The protein resides in the cytoplasmic vesicle. Its subcellular location is the autophagosome. Functionally, cholesterol transporter that mediates non-vesicular transport of cholesterol from the plasma membrane (PM) to the endoplasmic reticulum (ER). Contains unique domains for binding cholesterol and the PM, thereby serving as a molecular bridge for the transfer of cholesterol from the PM to the ER. Plays a crucial role in cholesterol homeostasis and has the unique ability to localize to the PM based on the level of membrane cholesterol. In lipid-poor conditions localizes to the ER membrane and in response to excess cholesterol in the PM is recruited to the endoplasmic reticulum-plasma membrane contact sites (EPCS) which is mediated by the GRAM domain. At the EPCS, the sterol-binding VASt/ASTER domain binds to the cholesterol in the PM and facilitates its transfer from the PM to ER. May play a role in tumor progression. Plays a role in autophagy regulation and is required for biogenesis of the autophagosome. This function in autophagy requires its cholesterol-transfer activity. The protein is Protein Aster-A of Homo sapiens (Human).